A 218-amino-acid polypeptide reads, in one-letter code: Large ribosomal subunit protein uL3 (218 aa).

The protein belongs to the universal ribosomal protein uL3 family. Part of the 50S ribosomal subunit. Forms a cluster with proteins L14 and L19.

Functionally, one of the primary rRNA binding proteins, it binds directly near the 3'-end of the 23S rRNA, where it nucleates assembly of the 50S subunit. The protein is Large ribosomal subunit protein uL3 of Corynebacterium glutamicum (strain R).